The following is a 340-amino-acid chain: Protein arginine N-methyltransferase 6 (340 aa).

The region spanning 15-339 (DQEYFQCYSD…LRRTKHFHMG (325 aa)) is the SAM-dependent MTase PRMT-type domain. Residues H28, R37, G61, E83, and E112 each contribute to the S-adenosyl-L-methionine site. Active-site residues include E126 and E135.

It belongs to the class I-like SAM-binding methyltransferase superfamily. Protein arginine N-methyltransferase family. PRMT6 subfamily.

The protein localises to the nucleus. It carries out the reaction L-arginyl-[protein] + 2 S-adenosyl-L-methionine = N(omega),N(omega)-dimethyl-L-arginyl-[protein] + 2 S-adenosyl-L-homocysteine + 2 H(+). Functionally, arginine methyltransferase that can catalyze the formation of both omega-N monomethylarginine (MMA) and asymmetrical dimethylarginine (aDMA), with a strong preference for the formation of aDMA. Preferentially methylates arginyl residues present in a glycine and arginine-rich domain and displays preference for monomethylated substrates. Specifically mediates the asymmetric dimethylation of histone H3 'Arg-2' to form H3R2me2a. H3R2me2a represents a specific tag for epigenetic transcriptional repression and is mutually exclusive with methylation on histone H3 'Lys-4' (H3K4me2 and H3K4me3). Acts as a transcriptional repressor of various genes such as HOXA2, THBS1 and TP53. Repression of TP53 blocks cellular senescence. Also methylates histone H2A and H4 'Arg-3' (H2AR3me and H4R3me, respectively). Acts as a regulator of DNA base excision during DNA repair by mediating the methylation of DNA polymerase beta (POLB), leading to the stimulation of its polymerase activity by enhancing DNA binding and processivity. Methylates HMGA1. Regulates alternative splicing events. Acts as a transcriptional coactivator of a number of steroid hormone receptors including ESR1, ESR2, PGR and NR3C1. The chain is Protein arginine N-methyltransferase 6 (prmt6) from Xenopus laevis (African clawed frog).